The primary structure comprises 95 residues: Antitoxin VapB41 (95 aa).

Antitoxin component of a type II toxin-antitoxin (TA) system. This Mycobacterium tuberculosis (strain CDC 1551 / Oshkosh) protein is Antitoxin VapB41 (vapB41).